Here is a 235-residue protein sequence, read N- to C-terminus: Probable ribosomal RNA small subunit methyltransferase A (235 aa).

S-adenosyl-L-methionine-binding residues include His9, Leu11, Gly34, Glu55, Asp78, and Asn93.

This sequence belongs to the class I-like SAM-binding methyltransferase superfamily. rRNA adenine N(6)-methyltransferase family. RsmA subfamily.

The protein localises to the cytoplasm. Functionally, specifically dimethylates two adjacent adenosines in the loop of a conserved hairpin near the 3'-end of 16S rRNA in the 30S particle. May play a critical role in biogenesis of 30S subunits. This chain is Probable ribosomal RNA small subunit methyltransferase A, found in Pyrobaculum islandicum (strain DSM 4184 / JCM 9189 / GEO3).